The following is an 84-amino-acid chain: Succinate dehydrogenase membrane anchor subunit (84 aa).

The Mitochondrial matrix segment spans residues 1–3 (MIT). The chain crosses the membrane as a helical span at residues 4 to 24 (FQWLIVRVVALFISLTILIDI). Residues 25–31 (EMFVVML) lie on the Mitochondrial intermembrane side of the membrane. A helical membrane pass occupies residues 32 to 52 (SFLIIHISIGLKAIIHDYIHF). A heme-binding site is contributed by H37. Y49 serves as a coordination point for a ubiquinone. The Mitochondrial matrix segment spans residues 53–58 (QKIKLM). A helical transmembrane segment spans residues 59–81 (LLILLRVSAIEISRSFRTFYIII). The Mitochondrial intermembrane segment spans residues 82–84 (KNT).

In terms of assembly, part of an enzyme complex containing four subunits: a flavoprotein, an iron-sulfur protein, plus two membrane-anchoring proteins. It depends on heme as a cofactor.

It is found in the mitochondrion inner membrane. It functions in the pathway carbohydrate metabolism; tricarboxylic acid cycle. Membrane-anchoring subunit of succinate dehydrogenase (SDH). This Chondrus crispus (Carrageen Irish moss) protein is Succinate dehydrogenase membrane anchor subunit (SDH4).